A 277-amino-acid chain; its full sequence is Chitosanase (277 aa).

The first 35 residues, 1-35 (MKISMQKADFWKKAAISLLVFTMFFTLMMSETVFA), serve as a signal peptide directing secretion. Glu-54 serves as the catalytic Proton donor. Residue Asp-70 is the Nucleophile of the active site.

This sequence belongs to the glycosyl hydrolase 46 family.

Its subcellular location is the secreted. It carries out the reaction Endohydrolysis of beta-(1-&gt;4)-linkages between D-glucosamine residues in a partly acetylated chitosan.. In terms of biological role, aids in the defense against invading fungal pathogens by degrading their cell wall chitosan. In Bacillus subtilis (strain 168), this protein is Chitosanase (csn).